The following is a 150-amino-acid chain: Transcriptional repressor NrdR (150 aa).

A zinc finger spans residues 3–34 (CPFCQHDHSKVIDSRVIDAGSAIRRRRECSKC). Positions 46-136 (LLVVKRNGVT…VYKSFDSADD (91 aa)) constitute an ATP-cone domain.

The protein belongs to the NrdR family. The cofactor is Zn(2+).

Negatively regulates transcription of bacterial ribonucleotide reductase nrd genes and operons by binding to NrdR-boxes. The chain is Transcriptional repressor NrdR from Corynebacterium glutamicum (strain ATCC 13032 / DSM 20300 / JCM 1318 / BCRC 11384 / CCUG 27702 / LMG 3730 / NBRC 12168 / NCIMB 10025 / NRRL B-2784 / 534).